Consider the following 373-residue polypeptide: 4-hydroxy-3-methylbut-2-en-1-yl diphosphate synthase (flavodoxin) (373 aa).

Residues Cys270, Cys273, Cys305, and Glu312 each contribute to the [4Fe-4S] cluster site.

This sequence belongs to the IspG family. The cofactor is [4Fe-4S] cluster.

The catalysed reaction is (2E)-4-hydroxy-3-methylbut-2-enyl diphosphate + oxidized [flavodoxin] + H2O + 2 H(+) = 2-C-methyl-D-erythritol 2,4-cyclic diphosphate + reduced [flavodoxin]. It participates in isoprenoid biosynthesis; isopentenyl diphosphate biosynthesis via DXP pathway; isopentenyl diphosphate from 1-deoxy-D-xylulose 5-phosphate: step 5/6. Its function is as follows. Converts 2C-methyl-D-erythritol 2,4-cyclodiphosphate (ME-2,4cPP) into 1-hydroxy-2-methyl-2-(E)-butenyl 4-diphosphate. The sequence is that of 4-hydroxy-3-methylbut-2-en-1-yl diphosphate synthase (flavodoxin) from Pectobacterium carotovorum subsp. carotovorum (strain PC1).